A 490-amino-acid chain; its full sequence is Glutamate--tRNA ligase 1 (490 aa).

The 'HIGH' region signature appears at 27–37 (PSPTGYLHIGG). Residues 254–258 (KLSKR) carry the 'KMSKS' region motif. Lysine 257 provides a ligand contact to ATP.

This sequence belongs to the class-I aminoacyl-tRNA synthetase family. Glutamate--tRNA ligase type 1 subfamily. In terms of assembly, monomer.

It is found in the cytoplasm. The enzyme catalyses tRNA(Glu) + L-glutamate + ATP = L-glutamyl-tRNA(Glu) + AMP + diphosphate. Catalyzes the attachment of glutamate to tRNA(Glu) in a two-step reaction: glutamate is first activated by ATP to form Glu-AMP and then transferred to the acceptor end of tRNA(Glu). The chain is Glutamate--tRNA ligase 1 from Sphingopyxis alaskensis (strain DSM 13593 / LMG 18877 / RB2256) (Sphingomonas alaskensis).